The sequence spans 990 residues: MIFSAITADLDNTALAARFGAGPRLYDPVLAAERWAGWLVDLAPEQADAIAALGNAFPDLQIALQSIAEASPYLFDLIRGDPVRLLRVLRGAPEQRLAKLLEDAETFVAAASAEDEVMAALRRLKAEAALLIALCDIGGIWPVMQVTQALTDLAGRSVQMALRFLLRLEAGRGRIVPPNPDCPEQGSGLIVLAMGKMGAGELNYSSDIDLIVFYELDAPTLAPDIEPQPFFVRVTQGLSRILQQRRGDGYVFRVDLRLRPDPASTPVALSTVSALDYYEREGRTWERAAMIKARPCAGDLVAGDALLSEIAPFVWRKHLDFAALSDVHDMKRQMQTYRGQTEIAVEGHNVKVGRGGIREIEFFAQTQQLIAGGRHPELRVRPTLEALEILAARNWITIQARDELTEAYLFLRKVEHRVQMIADEQTHALPDTVEAIERFSRFLGYDSRDSFARDLLGYLERVQGHYAKLFEGDPTGTAKLPPVDYGAGPEDTRLLDHLLSLGYKKPLMIATTLQQWMTGGYRVLKVETTQRAFREFVPALIEELARAEQPDDAVNAFDRLLQALHRGGRLISLLSQNRELLTLVALVLGAAPRLGDMLARQPQILDGLIDPRFFGAMPDQAELSARLAVTLADAGSYEEFLDRLRLFGQESLFLIGTRILSGTVPTQQAAVAFADVAEGIVGTVHGLVSEQFASTYGRVKGQQTAILAMGKLGSREMTASSDLDLILIYDFDDDQPDSDGERSLHGAQYFARFTQRLISAFTTRTNYGVLYDVDMRLRPSGRAGPVASRLDAFAAYQEQEAWTWEHLALTRARVISAPPEFRSRIEQVIRAVLTRPRDAAIIANDVAEMRRAIAQEKGEDDVWDLKYAAGGMVDIDFIAQYLQLVHAHEAPDILHVNTLSALDNATRLGLLAQADAEVLRPAARLYQNLTQILRLCVSEKFNPDTAGDDLLRVMVRAGDAPDFSSLQARVKETQSDVRAIFNRLIGGEDA.

The tract at residues 1 to 474 is adenylyl removase; the sequence is MIFSAITADL…HYAKLFEGDP (474 aa). An adenylyl transferase region spans residues 478–990; that stretch reads AKLPPVDYGA…FNRLIGGEDA (513 aa).

The protein belongs to the GlnE family. Requires Mg(2+) as cofactor.

It carries out the reaction [glutamine synthetase]-O(4)-(5'-adenylyl)-L-tyrosine + phosphate = [glutamine synthetase]-L-tyrosine + ADP. It catalyses the reaction [glutamine synthetase]-L-tyrosine + ATP = [glutamine synthetase]-O(4)-(5'-adenylyl)-L-tyrosine + diphosphate. Functionally, involved in the regulation of glutamine synthetase GlnA, a key enzyme in the process to assimilate ammonia. When cellular nitrogen levels are high, the C-terminal adenylyl transferase (AT) inactivates GlnA by covalent transfer of an adenylyl group from ATP to specific tyrosine residue of GlnA, thus reducing its activity. Conversely, when nitrogen levels are low, the N-terminal adenylyl removase (AR) activates GlnA by removing the adenylyl group by phosphorolysis, increasing its activity. The regulatory region of GlnE binds the signal transduction protein PII (GlnB) which indicates the nitrogen status of the cell. The polypeptide is Bifunctional glutamine synthetase adenylyltransferase/adenylyl-removing enzyme (Rhodopseudomonas palustris (strain TIE-1)).